A 170-amino-acid chain; its full sequence is Adenine phosphoribosyltransferase (170 aa).

Belongs to the purine/pyrimidine phosphoribosyltransferase family. As to quaternary structure, homodimer.

Its subcellular location is the cytoplasm. The catalysed reaction is AMP + diphosphate = 5-phospho-alpha-D-ribose 1-diphosphate + adenine. The protein operates within purine metabolism; AMP biosynthesis via salvage pathway; AMP from adenine: step 1/1. Its function is as follows. Catalyzes a salvage reaction resulting in the formation of AMP, that is energically less costly than de novo synthesis. The sequence is that of Adenine phosphoribosyltransferase from Carboxydothermus hydrogenoformans (strain ATCC BAA-161 / DSM 6008 / Z-2901).